Consider the following 938-residue polypeptide: Isoleucine--tRNA ligase (938 aa).

Residues 65–75 (PYANGSIHIGH) carry the 'HIGH' region motif. E568 lines the L-isoleucyl-5'-AMP pocket. A 'KMSKS' region motif is present at residues 609 to 613 (KMSKS). Residue K612 participates in ATP binding. Residues C905, C908, C921, and C924 each contribute to the Zn(2+) site.

It belongs to the class-I aminoacyl-tRNA synthetase family. IleS type 1 subfamily. Monomer. It depends on Zn(2+) as a cofactor.

The protein localises to the cytoplasm. The enzyme catalyses tRNA(Ile) + L-isoleucine + ATP = L-isoleucyl-tRNA(Ile) + AMP + diphosphate. Catalyzes the attachment of isoleucine to tRNA(Ile). As IleRS can inadvertently accommodate and process structurally similar amino acids such as valine, to avoid such errors it has two additional distinct tRNA(Ile)-dependent editing activities. One activity is designated as 'pretransfer' editing and involves the hydrolysis of activated Val-AMP. The other activity is designated 'posttransfer' editing and involves deacylation of mischarged Val-tRNA(Ile). This is Isoleucine--tRNA ligase from Mannheimia succiniciproducens (strain KCTC 0769BP / MBEL55E).